The following is a 1406-amino-acid chain: DNA topoisomerase 2 (1406 aa).

Residues Asn-69, Asn-98, 126–128 (SSN), and 139–146 (GRNGYGAK) contribute to the ATP site. An interaction with DNA region spans residues 332-334 (KKK). ATP is bound at residue 363–365 (QTK). The 115-residue stretch at 441-555 (CTLILTEGDS…GLLDIPGFLI (115 aa)) folds into the Toprim domain. Mg(2+) is bound by residues Glu-447, Asp-524, and Asp-526. Positions 690 to 1159 (IPSVLDGFKP…SAKDLWNNDL (470 aa)) constitute a Topo IIA-type catalytic domain. The active-site O-(5'-phospho-DNA)-tyrosine intermediate is the Tyr-780. An interaction with DNA region spans residues 963–972 (KLISPISLQN). Acidic residues predominate over residues 1079-1089 (EDEDEDLEESE). Disordered regions lie at residues 1079–1106 (EDED…VNGP), 1183–1215 (KTKG…KKIK), 1230–1287 (KIKA…DESG), and 1303–1406 (DEDA…FNDE). Positions 1090–1100 (EATRKKDKDDE) are enriched in basic and acidic residues. The span at 1204 to 1214 (KKKPARRIKKI) shows a compositional bias: basic residues. Residues 1261 to 1274 (DVTSNASTPSTTIF) show a composition bias toward polar residues. A compositionally biased stretch (basic residues) spans 1326–1336 (AKKKAPPKRKA). 2 stretches are compositionally biased toward acidic residues: residues 1341 to 1359 (SSED…DEEV) and 1381 to 1406 (EISD…FNDE).

The protein belongs to the type II topoisomerase family. As to quaternary structure, homodimer. The cofactor is Mg(2+). Mn(2+) serves as cofactor. Ca(2+) is required as a cofactor.

Its subcellular location is the nucleus. It catalyses the reaction ATP-dependent breakage, passage and rejoining of double-stranded DNA.. Functionally, control of topological states of DNA by transient breakage and subsequent rejoining of DNA strands. Topoisomerase II makes double-strand breaks. The chain is DNA topoisomerase 2 (TOP2) from Candida glabrata (strain ATCC 2001 / BCRC 20586 / JCM 3761 / NBRC 0622 / NRRL Y-65 / CBS 138) (Yeast).